The primary structure comprises 1840 residues: Neurexin 1 (1840 aa).

The segment at 1–50 (MKAPHSATYQDNYADAAMTARTRPSMDMDQQRNRNQAELRLLPAQRTSTS) is disordered. The Extracellular portion of the chain corresponds to 1-1696 (MKAPHSATYQ…NSIEEERTAM (1696 aa)). Residues 24 to 37 (PSMDMDQQRNRNQA) are compositionally biased toward basic and acidic residues. One can recognise a Laminin G-like 1 domain in the interval 104–289 (GFQLDGSQNS…RDIKCGDVPC (186 aa)). The region spanning 309 to 347 (TTDACERNDPCQHGGICISTDSGPICECRNLEYDGQYCE) is the EGF-like 1 domain. Cystine bridges form between Cys313–Cys325, Cys319–Cys334, Cys336–Cys346, Cys511–Cys547, Cys710–Cys739, Cys746–Cys757, Cys751–Cys766, and Cys768–Cys778. Laminin G-like domains lie at 352-547 (PSEA…EYQC) and 554-739 (DPVT…KPSC). Residues 742–779 (QANVCNGNPCLNGGTCLEGWNRPICDCSATLYGGPTCG) form the EGF-like 2 domain. Laminin G-like domains follow at residues 784-964 (TLAF…LPSA) and 982-1158 (HAAT…VSGC). Intrachain disulfides connect Cys1130/Cys1158, Cys1164/Cys1175, Cys1169/Cys1184, and Cys1186/Cys1196. Residues 1160 to 1197 (GPTKCSQNACANRGNCVQQWNAYACECDMTSYTGPTCY) form the EGF-like 3 domain. Residues 1201–1416 (IAYEFGNNKG…LIFSGAGSGC (216 aa)) form the Laminin G-like 6 domain. Residues 1411 to 1651 (GAGSGCRGDD…DEHHPLPPLP (241 aa)) form a disordered region. The segment covering 1447 to 1472 (QTTTSQQGNSLSTGGSSSGGVITNGT) has biased composition (low complexity). The span at 1491-1527 (TTEQFTSTSTARGSESNNEMVTITTTGRSDVTTEQHQ) shows a compositional bias: polar residues. Positions 1528-1600 (GSSSSSSSGS…TTTTTTTTQA (73 aa)) are enriched in low complexity. Residues 1632–1646 (RNDHDRMQLPDEHHP) are compositionally biased toward basic and acidic residues. Residues 1697–1717 (IIGIVAGILIAVVLVILLVLW) form a helical membrane-spanning segment. The Cytoplasmic portion of the chain corresponds to 1718–1840 (LKSNGDRGYK…DSKDVKEWYV (123 aa)). Positions 1737–1840 (GSHNPNAALL…DSKDVKEWYV (104 aa)) are disordered. The span at 1747–1757 (GNTSTNGSYHQ) shows a compositional bias: polar residues. Residues 1774–1787 (QQQHHAQQQMHNGH) show a composition bias toward low complexity. Over residues 1788 to 1813 (NGNGNGGGGGGGGMMSSGSGSLGYGS) the composition is skewed to gly residues. Zn(2+) is bound by residues Asp1831 and Asp1834. The segment covering 1831–1840 (DSKDVKEWYV) has biased composition (basic and acidic residues). The PDZ domain binding motif lies at 1837–1840 (EWYV).

This sequence belongs to the neurexin family. Interacts (via C-terminal PDZ binding motif) with CASK (via PDZ domain). Interacts (via cytoplasmic domain) with apolpp/ApoLI; the interaction supports apolpp/ApoLI protein stability. Interact (via cytoplasmic domain) with Spn/Spinophilin. Interacts with RhoGAP100F/Syd-1 (via PDZ domain); RhoGAP100F/Syd-1 may recruit Nrx-1 to the presynaptic active zone. As to expression, expressed in brain, with expression in medulla, lamina, lobula, lobula plate, mushroom body and antennal lobe, and in retina (at protein level). Expressed in rabdomere of photoreceptor cells (at protein level).

The protein resides in the synaptic cell membrane. It is found in the presynaptic cell membrane. It localises to the postsynaptic cell membrane. Its function is as follows. Neuronal cell adhesion protein involved in synapse formation, development of synaptic active zones, synaptic regulation and visual function. Plays a role in cell adhesion between the pre- and the postsynaptic cell. Required for proper proliferation of synaptic boutons during larval development, a process necessary for coordinated matching of pre-and postsynaptic compartments. Promotes presynaptic active zone formation and neurotransmitter release. Spn/Spinophilin fine-tunes nrx-1/nlg1 signaling at the pre-synapse to control active zone number and functionality and thereby optimizing action potential-induced exocytosis. Required for synapse formation in central nervous system. By regulating synapse formation, may play a role in larval associative learning. Together with RhoGAP100F/syd-1, controls synapse formation at the neuromuscular junction. Essential for synaptic vesicle cycling, which plays critical roles in neurotransmission at neuromuscular junctions (NMJ). Regulated and restricts formation of glutamate receptor clusters. Mediates retinoid transport and subsequent rhodopsin maturation and may regulate lipoprotein function; thereby playing a role in vision. Regulates sleep, circadian rhythm and synaptic plasticity. Together with CASK, required for locomotion. The sequence is that of Neurexin 1 from Drosophila melanogaster (Fruit fly).